The sequence spans 469 residues: Putative dipeptidase SAB1611c (469 aa).

Zn(2+) is bound at residue His-84. Asp-86 is a catalytic residue. Asp-115 contributes to the Zn(2+) binding site. Glu-149 serves as the catalytic Proton acceptor. Residues Glu-150, Asp-173, and His-440 each contribute to the Zn(2+) site.

The protein belongs to the peptidase M20A family. Zn(2+) serves as cofactor.

The sequence is that of Putative dipeptidase SAB1611c from Staphylococcus aureus (strain bovine RF122 / ET3-1).